The chain runs to 196 residues: Ribonuclease HII (196 aa).

The RNase H type-2 domain maps to 9 to 196 (GLVCGIDEAG…GPVARQLSLL (188 aa)). The a divalent metal cation site is built by Asp-15, Glu-16, and Asp-107.

The protein belongs to the RNase HII family. It depends on Mn(2+) as a cofactor. Mg(2+) serves as cofactor.

The protein localises to the cytoplasm. The catalysed reaction is Endonucleolytic cleavage to 5'-phosphomonoester.. Its function is as follows. Endonuclease that specifically degrades the RNA of RNA-DNA hybrids. This chain is Ribonuclease HII, found in Dechloromonas aromatica (strain RCB).